Here is a 150-residue protein sequence, read N- to C-terminus: Transmembrane protein 35B (150 aa).

The N-terminal stretch at 1–21 is a signal peptide; sequence MSFRVGVLRVLLGVFFALTGA. The next 3 membrane-spanning stretches (helical) occupy residues 62–82, 84–104, and 111–131; these read TAVG…PPVL, EISN…LVVL, and YVPA…HFLA.

This sequence belongs to the DoxX family.

It localises to the membrane. The chain is Transmembrane protein 35B from Mus musculus (Mouse).